The chain runs to 100 residues: uncharacterized protein (100 aa).

This is an uncharacterized protein from Caulobacter vibrioides (strain ATCC 19089 / CIP 103742 / CB 15) (Caulobacter crescentus).